The primary structure comprises 191 residues: GDP-mannose pyrophosphatase (191 aa).

GDP-alpha-D-mannose-binding positions include Tyr-17, 38-40 (KRE), Arg-67, and 85-87 (AGL). The Nudix hydrolase domain occupies 43–180 (DRGNGATILL…EIRDGKTVLL (138 aa)). Ala-85, Glu-100, and Glu-104 together coordinate Mg(2+). Positions 86 to 106 (GLLDNDEPEVCIRKEAIEETG) match the Nudix box motif. GDP-alpha-D-mannose is bound by residues Glu-104, Glu-127, 150–151 (DE), and Lys-176. Glu-151 lines the Mg(2+) pocket.

This sequence belongs to the Nudix hydrolase family. NudK subfamily. Homodimer. It depends on Mg(2+) as a cofactor.

It catalyses the reaction GDP-alpha-D-mannose + H2O = alpha-D-mannose 1-phosphate + GMP + 2 H(+). Nucleoside diphosphate sugar hydrolase that hydrolyzes GDP-mannose as its preferred substrate, yielding GMP and mannose-1-phosphate. In Salmonella typhi, this protein is GDP-mannose pyrophosphatase (nudK).